The sequence spans 114 residues: Iron-sulfur cluster insertion protein ErpA (114 aa).

Positions 42, 106, and 108 each coordinate iron-sulfur cluster.

This sequence belongs to the HesB/IscA family. In terms of assembly, homodimer. The cofactor is iron-sulfur cluster.

In terms of biological role, required for insertion of 4Fe-4S clusters for at least IspG. This Yersinia pseudotuberculosis serotype O:1b (strain IP 31758) protein is Iron-sulfur cluster insertion protein ErpA.